The primary structure comprises 312 residues: Tyrosine recombinase XerC (312 aa).

In terms of domain architecture, Core-binding (CB) spans 1-103 (MIASIYSFLD…SIKSFAHYCV (103 aa)). The Tyr recombinase domain occupies 124-306 (ELPSPMTYAQ…SVKLKKQTHQ (183 aa)). Active-site residues include Arg164, Lys188, His258, Arg261, and His284. Tyr293 (O-(3'-phospho-DNA)-tyrosine intermediate) is an active-site residue.

It belongs to the 'phage' integrase family. XerC subfamily. As to quaternary structure, forms a cyclic heterotetrameric complex composed of two molecules of XerC and two molecules of XerD.

It localises to the cytoplasm. In terms of biological role, site-specific tyrosine recombinase, which acts by catalyzing the cutting and rejoining of the recombining DNA molecules. The XerC-XerD complex is essential to convert dimers of the bacterial chromosome into monomers to permit their segregation at cell division. It also contributes to the segregational stability of plasmids. The chain is Tyrosine recombinase XerC from Chlamydia pneumoniae (Chlamydophila pneumoniae).